The primary structure comprises 357 residues: Chorismate synthase (357 aa).

Arg-47 provides a ligand contact to NADP(+). Residues 123-125 (RSS), Gly-281, 296-300 (KPTSS), and Arg-324 each bind FMN.

Belongs to the chorismate synthase family. In terms of assembly, homotetramer. The cofactor is FMNH2.

The enzyme catalyses 5-O-(1-carboxyvinyl)-3-phosphoshikimate = chorismate + phosphate. It participates in metabolic intermediate biosynthesis; chorismate biosynthesis; chorismate from D-erythrose 4-phosphate and phosphoenolpyruvate: step 7/7. In terms of biological role, catalyzes the anti-1,4-elimination of the C-3 phosphate and the C-6 proR hydrogen from 5-enolpyruvylshikimate-3-phosphate (EPSP) to yield chorismate, which is the branch point compound that serves as the starting substrate for the three terminal pathways of aromatic amino acid biosynthesis. This reaction introduces a second double bond into the aromatic ring system. This chain is Chorismate synthase, found in Chlamydia muridarum (strain MoPn / Nigg).